A 568-amino-acid polypeptide reads, in one-letter code: Phosphomethylpyrimidine synthase (568 aa).

Substrate is bound by residues N188, M217, Y246, H282, 302–304 (SRG), 343–346 (DGLR), and E382. H386 serves as a coordination point for Zn(2+). Residue Y409 participates in substrate binding. H450 lines the Zn(2+) pocket. Residues C530, C533, and C538 each coordinate [4Fe-4S] cluster.

Belongs to the ThiC family. As to quaternary structure, homodimer. It depends on [4Fe-4S] cluster as a cofactor.

The catalysed reaction is 5-amino-1-(5-phospho-beta-D-ribosyl)imidazole + S-adenosyl-L-methionine = 4-amino-2-methyl-5-(phosphooxymethyl)pyrimidine + CO + 5'-deoxyadenosine + formate + L-methionine + 3 H(+). It participates in cofactor biosynthesis; thiamine diphosphate biosynthesis. Functionally, catalyzes the synthesis of the hydroxymethylpyrimidine phosphate (HMP-P) moiety of thiamine from aminoimidazole ribotide (AIR) in a radical S-adenosyl-L-methionine (SAM)-dependent reaction. The protein is Phosphomethylpyrimidine synthase of Idiomarina loihiensis (strain ATCC BAA-735 / DSM 15497 / L2-TR).